Reading from the N-terminus, the 171-residue chain is NADH-quinone oxidoreductase subunit B 2 (171 aa).

[4Fe-4S] cluster-binding residues include Cys37, Cys38, Cys102, and Cys132.

Belongs to the complex I 20 kDa subunit family. NDH-1 is composed of 14 different subunits. Subunits NuoB, C, D, E, F, and G constitute the peripheral sector of the complex. The cofactor is [4Fe-4S] cluster.

It is found in the cell inner membrane. It carries out the reaction a quinone + NADH + 5 H(+)(in) = a quinol + NAD(+) + 4 H(+)(out). Functionally, NDH-1 shuttles electrons from NADH, via FMN and iron-sulfur (Fe-S) centers, to quinones in the respiratory chain. Couples the redox reaction to proton translocation (for every two electrons transferred, four hydrogen ions are translocated across the cytoplasmic membrane), and thus conserves the redox energy in a proton gradient. The protein is NADH-quinone oxidoreductase subunit B 2 of Chromobacterium violaceum (strain ATCC 12472 / DSM 30191 / JCM 1249 / CCUG 213 / NBRC 12614 / NCIMB 9131 / NCTC 9757 / MK).